The primary structure comprises 739 residues: Exocyst complex component 3-like protein (739 aa).

Disordered regions lie at residues 1–21 (MDSK…PEWP) and 698–718 (AALS…RRAL). A mediates interaction with EXOC2, EXOC4 and EXOC5 region spans residues 1-370 (MDSKIQPTLR…DVSQLEPLLT (370 aa)).

Belongs to the SEC6 family. As to quaternary structure, interacts with EXOC2, EXOC4 and EXOC5; may be part of the exocyst. Ubiquitously expressed.

Its subcellular location is the cytoplasmic vesicle. The protein localises to the secretory vesicle. As part of the exocyst, may play a role in regulated exocytosis of insulin granules. The sequence is that of Exocyst complex component 3-like protein (Exoc3l1) from Mus musculus (Mouse).